We begin with the raw amino-acid sequence, 135 residues long: MAKQQTSPETRSVRLLKVGEQVRHILSELLARQEVHDDVLSAHTVSVTEVRMSPDLRHATVFIKALLGEDEDLVLKALRTNTAFFQREVAQRLRLKYAARLKFLADESFDVASKIETLLADPKVQRDLRDQESDG.

This sequence belongs to the RbfA family. As to quaternary structure, monomer. Binds 30S ribosomal subunits, but not 50S ribosomal subunits or 70S ribosomes.

It is found in the cytoplasm. Its function is as follows. One of several proteins that assist in the late maturation steps of the functional core of the 30S ribosomal subunit. Associates with free 30S ribosomal subunits (but not with 30S subunits that are part of 70S ribosomes or polysomes). Required for efficient processing of 16S rRNA. May interact with the 5'-terminal helix region of 16S rRNA. The sequence is that of Ribosome-binding factor A from Novosphingobium aromaticivorans (strain ATCC 700278 / DSM 12444 / CCUG 56034 / CIP 105152 / NBRC 16084 / F199).